The sequence spans 292 residues: tRNA (guanine-N(7)-)-methyltransferase (292 aa).

Residues 1 to 54 (MLKRDQSEMDIEAETANMGKEEKESFVHKRQKYRQEQEEKRLAAKKGVSFEQPE) are disordered. A compositionally biased stretch (basic and acidic residues) spans 19–42 (GKEEKESFVHKRQKYRQEQEEKRL). S-adenosyl-L-methionine contacts are provided by residues Gly-110, 133 to 134 (EI), 168 to 169 (NA), and Cys-188. Residue Asp-191 is part of the active site. Residue 266-268 (TEE) participates in S-adenosyl-L-methionine binding.

This sequence belongs to the class I-like SAM-binding methyltransferase superfamily. TrmB family. In terms of assembly, forms a complex with TRM82.

Its subcellular location is the nucleus. It carries out the reaction guanosine(46) in tRNA + S-adenosyl-L-methionine = N(7)-methylguanosine(46) in tRNA + S-adenosyl-L-homocysteine. Its pathway is tRNA modification; N(7)-methylguanine-tRNA biosynthesis. Catalyzes the formation of N(7)-methylguanine at position 46 (m7G46) in tRNA. The sequence is that of tRNA (guanine-N(7)-)-methyltransferase from Yarrowia lipolytica (strain CLIB 122 / E 150) (Yeast).